The primary structure comprises 257 residues: Phosphonates import ATP-binding protein PhnC (257 aa).

One can recognise an ABC transporter domain in the interval 4 to 248; sequence IEFKNVSKVY…VFSEIYGRTI (245 aa). Residue 37-44 coordinates ATP; the sequence is GLSGAGKS.

This sequence belongs to the ABC transporter superfamily. Phosphonates importer (TC 3.A.1.9.1) family. The complex is composed of two ATP-binding proteins (PhnC), two transmembrane proteins (PhnE) and a solute-binding protein (PhnD).

The protein localises to the cell membrane. The enzyme catalyses phosphonate(out) + ATP + H2O = phosphonate(in) + ADP + phosphate + H(+). In terms of biological role, part of the ABC transporter complex PhnCDE involved in phosphonates import. Responsible for energy coupling to the transport system. In Staphylococcus aureus (strain COL), this protein is Phosphonates import ATP-binding protein PhnC.